The chain runs to 565 residues: DNA-dependent metalloprotease SPRTN (565 aa).

One can recognise a SprT-like domain in the interval 23 to 130; the sequence is RALFLEFNDT…RTGANISVYH (108 aa). Residue H88 participates in Zn(2+) binding. The active site involves E89. 2 residues coordinate Zn(2+): H92 and H107. The disordered stretch occupies residues 191–219; it reads EPENYPQKRKRKNDPTISEVNSSSHVKGK. Residues 205 to 215 are compositionally biased toward polar residues; it reads PTISEVNSSSH. Positions 231–239 match the SHP-box motif; that stretch reads FSGTGYKLF. The short motif at 288 to 295 is the PIP-box element; the sequence is STPAQSIL. Residues 349–389 form a disordered region; that stretch reads TLPSPSIQSTSQKPQKDISFGFTLPSQSFPSTSPGSNSENK. Polar residues-rich tracts occupy residues 351-361 and 372-386; these read PSPSIQSTSQK and LPSQ…GSNS. The segment at 436–463 adopts a UBZ4-type 1 zinc-finger fold; the sequence is KVSCPVCGTEVLECKINDHLDTCTSSGP. Positions 439, 442, 454, and 458 each coordinate Zn(2+). A Nuclear localization signal motif is present at residues 476–499; sequence QSFPSTSQGSNSAIKEPLYKKLQI. The UBZ4-type 2 zinc finger occupies 537–564; the sequence is KVCCPVCGTDVLQDKINDHLDTCLQNCN. Residues C540, C543, H555, and C559 each coordinate Zn(2+).

It belongs to the Spartan family. Homodimer. The cofactor is Zn(2+). Post-translationally, autocatalytically cleaved in response to double-stranded DNA-binding: autocatalytic cleavage takes place in trans and leads to inactivation.

It localises to the nucleus. The protein resides in the chromosome. Its activity is regulated as follows. DNA-binding activates the protease activity: single-stranded DNA-binding specifically activates ability to cleave covalent DNA-protein cross-links (DPCs). In contrast, double-stranded DNA-binding specifically activates autocatalytic cleavage, and subsequent inactivation. DNA-dependent metalloendopeptidase that mediates the proteolytic cleavage of covalent DNA-protein cross-links (DPCs) during DNA synthesis, thereby playing a key role in maintaining genomic integrity. DPCs are highly toxic DNA lesions that interfere with essential chromatin transactions, such as replication and transcription, and which are induced by reactive agents, such as UV light or formaldehyde. Associates with the DNA replication machinery and specifically removes DPCs during DNA synthesis. Catalyzes proteolytic cleavage of the hmces DNA-protein cross-link following unfolding by the brip1/fancj helicase. Acts as a pleiotropic protease for DNA-binding proteins cross-linked with DNA, such as top1, top2a, histones H3 and H4. Mediates degradation of DPCs that are not ubiquitinated, while it is not able to degrade ubiquitinated DPCs. SPRTN activation requires polymerase collision with DPCs followed by helicase bypass of DPCs. May also act as a 'reader' of ubiquitinated pcna: facilitates chromatin association of rad18 and is required for efficient pcna monoubiquitination, promoting a feed-forward loop to enhance pcna ubiquitination and translesion DNA synthesis. Acts as a regulator of translesion DNA synthesis by recruiting vcp/p97 to sites of DNA damage. This chain is DNA-dependent metalloprotease SPRTN, found in Xenopus laevis (African clawed frog).